The primary structure comprises 208 residues: MISDIEFAFSECNFQFAYKDLQKINLYIKRILLLNTRFNLISNSNSNFNSILNLHVIDSLLGLPTIKEINPSEILDVGSGSGFPGIVLAIFDTSRKYYLLERSKKKSTFLKMIKLELDLENVKILEYEIEREKKKYEFITIRAFRSMNEYALVLKNLLKNGGLIMAYKGKFDKINLEVNQIKDLFSKIEVKSLNSKLSLDRNLVLLYR.

Residues Gly78, Phe83, 101 to 103 (ERS), 129 to 130 (IE), and Arg142 contribute to the S-adenosyl-L-methionine site.

This sequence belongs to the methyltransferase superfamily. RNA methyltransferase RsmG family.

The protein resides in the cytoplasm. Functionally, specifically methylates the N7 position of a guanine in 16S rRNA. This is Ribosomal RNA small subunit methyltransferase G from Borrelia garinii subsp. bavariensis (strain ATCC BAA-2496 / DSM 23469 / PBi) (Borreliella bavariensis).